The sequence spans 344 residues: Serine/threonine-protein kinase ppk13 (344 aa).

ATP contacts are provided by residues 38 to 46 and lysine 61; that span reads LGEGGFAFV. Residues 76–344 form the Protein kinase domain; the sequence is MKEADYHRKF…LSKIDLQINQ (269 aa). Histidine 192 acts as the Proton acceptor in catalysis.

It belongs to the protein kinase superfamily. Ser/Thr protein kinase family.

Its subcellular location is the endoplasmic reticulum. The protein resides in the golgi apparatus. The enzyme catalyses L-seryl-[protein] + ATP = O-phospho-L-seryl-[protein] + ADP + H(+). The catalysed reaction is L-threonyl-[protein] + ATP = O-phospho-L-threonyl-[protein] + ADP + H(+). This chain is Serine/threonine-protein kinase ppk13 (ppk13), found in Schizosaccharomyces pombe (strain 972 / ATCC 24843) (Fission yeast).